Consider the following 404-residue polypeptide: Probable tRNA sulfurtransferase (404 aa).

The 106-residue stretch at 60–165 (QPIVEALKLV…DEAAYISYEE (106 aa)) folds into the THUMP domain. ATP is bound by residues 183–184 (ML), 208–209 (HF), Arg-265, Gly-287, and Gln-296.

Belongs to the ThiI family.

The protein localises to the cytoplasm. It carries out the reaction [ThiI sulfur-carrier protein]-S-sulfanyl-L-cysteine + a uridine in tRNA + 2 reduced [2Fe-2S]-[ferredoxin] + ATP + H(+) = [ThiI sulfur-carrier protein]-L-cysteine + a 4-thiouridine in tRNA + 2 oxidized [2Fe-2S]-[ferredoxin] + AMP + diphosphate. The enzyme catalyses [ThiS sulfur-carrier protein]-C-terminal Gly-Gly-AMP + S-sulfanyl-L-cysteinyl-[cysteine desulfurase] + AH2 = [ThiS sulfur-carrier protein]-C-terminal-Gly-aminoethanethioate + L-cysteinyl-[cysteine desulfurase] + A + AMP + 2 H(+). Its pathway is cofactor biosynthesis; thiamine diphosphate biosynthesis. Catalyzes the ATP-dependent transfer of a sulfur to tRNA to produce 4-thiouridine in position 8 of tRNAs, which functions as a near-UV photosensor. Also catalyzes the transfer of sulfur to the sulfur carrier protein ThiS, forming ThiS-thiocarboxylate. This is a step in the synthesis of thiazole, in the thiamine biosynthesis pathway. The sulfur is donated as persulfide by IscS. This Streptococcus pyogenes serotype M49 (strain NZ131) protein is Probable tRNA sulfurtransferase.